Consider the following 952-residue polypeptide: Leucine--tRNA ligase (952 aa).

Positions 66 to 77 (PYPSGAGLHVGH) match the 'HIGH' region motif. The 'KMSKS' region signature appears at 722 to 726 (KMGKS). Position 725 (Lys-725) interacts with ATP.

This sequence belongs to the class-I aminoacyl-tRNA synthetase family.

Its subcellular location is the cytoplasm. The catalysed reaction is tRNA(Leu) + L-leucine + ATP = L-leucyl-tRNA(Leu) + AMP + diphosphate. The sequence is that of Leucine--tRNA ligase from Corynebacterium glutamicum (strain R).